A 316-amino-acid chain; its full sequence is Tyrosine recombinase XerD (316 aa).

Residues 4-97 (AALQTQLQGY…AVRGLHRFAV (94 aa)) enclose the Core-binding (CB) domain. In terms of domain architecture, Tyr recombinase spans 118-309 (RLPKSLTVDE…TVQALREVWA (192 aa)). Catalysis depends on residues R162, K186, H261, R264, and H287. Residue Y296 is the O-(3'-phospho-DNA)-tyrosine intermediate of the active site.

This sequence belongs to the 'phage' integrase family. XerD subfamily. In terms of assembly, forms a cyclic heterotetrameric complex composed of two molecules of XerC and two molecules of XerD.

It localises to the cytoplasm. Site-specific tyrosine recombinase, which acts by catalyzing the cutting and rejoining of the recombining DNA molecules. The XerC-XerD complex is essential to convert dimers of the bacterial chromosome into monomers to permit their segregation at cell division. It also contributes to the segregational stability of plasmids. This chain is Tyrosine recombinase XerD, found in Mycobacterium leprae (strain TN).